Reading from the N-terminus, the 138-residue chain is Basic phospholipase A2 ammodytoxin C (138 aa).

Positions 1–16 (MRTLWIVAVCLIGVEG) are cleaved as a signal peptide. Cystine bridges form between C42–C131, C44–C60, C59–C111, C65–C138, C66–C104, C73–C97, and C91–C102. Residues Y43, G45, and G47 each contribute to the Ca(2+) site. The active site involves H63. Position 64 (D64) interacts with Ca(2+). The active site involves D105.

This sequence belongs to the phospholipase A2 family. Group II subfamily. D49 sub-subfamily. In terms of assembly, monomer. Binds to calmodulin, coagulation factor X (F10), 14-3-3 proteins gamma (YWHAG) and epsilon (YWHAE), and R25, a mitochondrial membrane protein. May bind to M-type PLA2 receptor (R-180). The cofactor is Ca(2+). In terms of tissue distribution, expressed by the venom gland.

It is found in the secreted. It localises to the host cytoplasm. Its subcellular location is the host cytosol. The catalysed reaction is a 1,2-diacyl-sn-glycero-3-phosphocholine + H2O = a 1-acyl-sn-glycero-3-phosphocholine + a fatty acid + H(+). Functionally, snake venom phospholipase A2 (PLA2) that acts as a presynaptic neurotoxin, an inhibitor of blood coagulation, and has been found to bind with high affinity to intracellular proteins. The response of indirectly stimulated neuromuscular preparations to ammodytoxin (Atx) is triphasic. The first phase, the transient inhibition of the acetylcholine (ACh) release, starts soon after the addition of Atx and lasts for several minutes. This phase is probably independent of Atx enzymatic activity. The effect may be due to the specific binding of the toxin to presynaptic receptors. These receptors, called N-type receptors, are still unidentified. It is noteworthy that a neuronal isoform of the M-type PLA2 receptor (R180) has been identified as a high-affinity receptor for Atx in neuronal plasma membranes. It was demonstrated however that this receptor is not essential for expression of neurotoxicity by Atx. The second phase corresponds to an augmentation of neurotransmitter release. A peak is reached 10-20 minutes after exposure of the preparation to Atx and is followed by a gradual reduction. In this phase, the enzymatic activity of Atx of the mammalian is not significant. It is speculated that the increased release of neurotransmitter in this phase is induced by the interference of Atx with voltage-gated potassium channels. Measurements of ionic showed however that voltage-gated potassium channels are not affected by Atx. The third phase of the response of neuromuscular preparations to Atx, which corresponds to a complete and irreversible paralysis, is clearly dependent on the hydrolytic activity of the toxin. In addition to its presynaptic neurotoxicity, Atx shows an anticoagulant activity by binding with high affinity to activated coagulation factor X (F10) thus inhibiting the formation of the prothrombinase complex (FX/FV) and its activity (IC(50) is 240 nM). Surprisingly, Atx was discovered to bind intracellular proteins such as calmodulin (CaM), 14-3-3 proteins gamma (YWHAG) and epsilon (YWHAE), as well as R25, a mitochondrial integral membrane protein found in cerebral cortex. These findings raised a doubt about the dogma of the exclusively extracellular action of PLA2s, defended by the potential instability of these molecules in the reducing environment of the eukaryotic cytosol coupled with their possible inability to act as enzymes in this cellular compartment, due to too low concentration of calcium ions. This hypothesis was challenged efficiently by demonstrating the internalization of AtxA into a culture cells, but still remains to be directly demonstrated in vivo. PLA2 catalyzes the calcium-dependent hydrolysis of the 2-acyl groups in 3-sn-phosphoglycerides. This chain is Basic phospholipase A2 ammodytoxin C, found in Vipera ammodytes ammodytes (Western sand viper).